A 633-amino-acid chain; its full sequence is DNA mismatch repair protein MutL (633 aa).

Disordered regions lie at residues 337–364 (RPDD…GEFG) and 383–405 (VGWS…TRPE). Residues 385–396 (WSGGSSASGGSS) are compositionally biased toward gly residues.

It belongs to the DNA mismatch repair MutL/HexB family.

This protein is involved in the repair of mismatches in DNA. It is required for dam-dependent methyl-directed DNA mismatch repair. May act as a 'molecular matchmaker', a protein that promotes the formation of a stable complex between two or more DNA-binding proteins in an ATP-dependent manner without itself being part of a final effector complex. In Pseudomonas aeruginosa (strain UCBPP-PA14), this protein is DNA mismatch repair protein MutL.